Here is a 249-residue protein sequence, read N- to C-terminus: Probable GDP-mannose transporter 2 (249 aa).

Residues 1-15 (MIYTSSKSLQYLAVP) lie on the Lumenal side of the membrane. The helical transmembrane segment at 16–36 (IYTIFKNLTIILIAYGEVLFF) threads the bilayer. Residues 37–47 (GGKVTSMELTS) are Cytoplasmic-facing. A helical membrane pass occupies residues 48-68 (FIMMVLSSVVATWGDQQAIAI). Residues 69–84 (KASSLEDLDQELVEST) lie on the Lumenal side of the membrane. Residues 85 to 105 (IFVLNPGYLWMFTNCISSALF) traverse the membrane as a helical segment. Residues 106–122 (VLIMRKRIRLTNFKDYD) lie on the Cytoplasmic side of the membrane. The helical transmembrane segment at 123 to 143 (TMFYNNVLALPLLLVFSFIME) threads the bilayer. Residues 144 to 159 (DWSTKNLSVNLSADSL) are Lumenal-facing. N-linked (GlcNAc...) asparagine glycosylation is found at N149 and N153. Residues 160–180 (AAMVISGLMSVGISYCSGWCV) traverse the membrane as a helical segment. The Cytoplasmic portion of the chain corresponds to 181–186 (RVTSST). A helical transmembrane segment spans residues 187–207 (TYSMVGALNKLPIALAGLVFF). Residues 208-211 (DAPK) are Lumenal-facing. Residues 212–232 (NFLSFFSIFLGFLSGLLYAVA) form a helical membrane-spanning segment. Over 233–249 (KQKKIQQQKVLAATLEK) the chain is Cytoplasmic.

It belongs to the TPT transporter family. SLC35D subfamily.

It is found in the golgi apparatus membrane. The protein resides in the cytoplasmic vesicle membrane. Its subcellular location is the endoplasmic reticulum membrane. In terms of biological role, involved in the import of GDP-mannose from the cytoplasm into the Golgi lumen. The chain is Probable GDP-mannose transporter 2 (HVG1) from Saccharomyces cerevisiae (strain RM11-1a) (Baker's yeast).